We begin with the raw amino-acid sequence, 202 residues long: Small ribosomal subunit protein uS4 (202 aa).

The 64-residue stretch at 94–157 (SRLDSLVYRA…LEIPLIKNTL (64 aa)) folds into the S4 RNA-binding domain.

This sequence belongs to the universal ribosomal protein uS4 family. In terms of assembly, part of the 30S ribosomal subunit. Contacts protein S5. The interaction surface between S4 and S5 is involved in control of translational fidelity.

Its function is as follows. One of the primary rRNA binding proteins, it binds directly to 16S rRNA where it nucleates assembly of the body of the 30S subunit. In terms of biological role, with S5 and S12 plays an important role in translational accuracy. The polypeptide is Small ribosomal subunit protein uS4 (Ureaplasma parvum serovar 3 (strain ATCC 27815 / 27 / NCTC 11736)).